Consider the following 136-residue polypeptide: Large ribosomal subunit protein uL16 (136 aa).

Belongs to the universal ribosomal protein uL16 family. In terms of assembly, part of the 50S ribosomal subunit.

Binds 23S rRNA and is also seen to make contacts with the A and possibly P site tRNAs. This Karelsulcia muelleri (strain GWSS) (Sulcia muelleri) protein is Large ribosomal subunit protein uL16.